The sequence spans 290 residues: Carbonic anhydrase-related protein (290 aa).

Positions 1–26 (MADLSFIEDTVAFPEKEEDEEEEEEG) are disordered. Ser5 is subject to Phosphoserine. Acidic residues predominate over residues 16 to 26 (KEEDEEEEEEG). The Alpha-carbonic anhydrase domain maps to 27–289 (VEWGYEEGVE…LSDRVIRAAF (263 aa)). The Proton donor/acceptor role is filled by His87. Zn(2+) is bound by residues His118 and His141.

It belongs to the alpha-carbonic anhydrase family.

Does not have a carbonic anhydrase catalytic activity. The sequence is that of Carbonic anhydrase-related protein (CA8) from Homo sapiens (Human).